Consider the following 89-residue polypeptide: Small ribosomal subunit protein uS15 (89 aa).

The protein belongs to the universal ribosomal protein uS15 family. As to quaternary structure, part of the 30S ribosomal subunit. Forms a bridge to the 50S subunit in the 70S ribosome, contacting the 23S rRNA.

One of the primary rRNA binding proteins, it binds directly to 16S rRNA where it helps nucleate assembly of the platform of the 30S subunit by binding and bridging several RNA helices of the 16S rRNA. Functionally, forms an intersubunit bridge (bridge B4) with the 23S rRNA of the 50S subunit in the ribosome. This Pectobacterium atrosepticum (strain SCRI 1043 / ATCC BAA-672) (Erwinia carotovora subsp. atroseptica) protein is Small ribosomal subunit protein uS15.